Consider the following 273-residue polypeptide: Translation initiation factor IF-3, mitochondrial (273 aa).

A mitochondrion-targeting transit peptide spans 1–32; that stretch reads MAALFLKKLTLQTVKTENYCIRRCLGKYILQG. Positions 33–92 are cleaved as a propeptide — removed in mature form; sequence PAPTQQPPRPSCLIHAKAFSTEDTQDEMTKKKKNETAFSSVGRKINERIIHVLDEQGNDL. The tract at residues 242-273 is disordered; sequence EEAAWKAAPDTPRRDALNGGDGKDGASGVLPQ. Residues 252–265 are compositionally biased toward basic and acidic residues; sequence TPRRDALNGGDGKD.

The protein belongs to the IF-3 family.

The protein localises to the mitochondrion. In terms of biological role, IF-3 binds to the 28S ribosomal subunit and shifts the equilibrium between 55S ribosomes and their 39S and 28S subunits in favor of the free subunits, thus enhancing the availability of 28S subunits on which protein synthesis initiation begins. The protein is Translation initiation factor IF-3, mitochondrial (MTIF3) of Bos taurus (Bovine).